The primary structure comprises 317 residues: MQILLANPRGFCAGVDRAISIVERAIEMYGAPIYVRHEVVHNRYVVESLCERGAIFIEEISEVPDGSILIFSAHGVSQAVRAEARSRNLTMLFDATCPLVTKVHMEVARASRKGKEAILIGHAGHPEVEGTMGQYSNPNGGMYLVESPDDVWQLSVKDENNLCFMTQTTLSVDDTSAVIDALNTRFPKIVGPRKDDICYATTNRQEAVRNLANDADIVLVVGSKNSSNSNRLAELVQRMGKPAYLIDSAADIQEFWLQGAKCIGVTAGASAPDILVQQVIARLKDLGAGESIELSGREENIVFEVPKELRVEVKQID.

Residue C12 participates in [4Fe-4S] cluster binding. Residues H41 and H74 each contribute to the (2E)-4-hydroxy-3-methylbut-2-enyl diphosphate site. Dimethylallyl diphosphate contacts are provided by H41 and H74. The isopentenyl diphosphate site is built by H41 and H74. Residue C97 participates in [4Fe-4S] cluster binding. H125 is a (2E)-4-hydroxy-3-methylbut-2-enyl diphosphate binding site. A dimethylallyl diphosphate-binding site is contributed by H125. Residue H125 participates in isopentenyl diphosphate binding. E127 serves as the catalytic Proton donor. Residue T168 coordinates (2E)-4-hydroxy-3-methylbut-2-enyl diphosphate. Residue C198 participates in [4Fe-4S] cluster binding. S226, S227, N228, and S270 together coordinate (2E)-4-hydroxy-3-methylbut-2-enyl diphosphate. The dimethylallyl diphosphate site is built by S226, S227, N228, and S270. Residues S226, S227, N228, and S270 each contribute to the isopentenyl diphosphate site.

This sequence belongs to the IspH family. As to quaternary structure, homodimer. It depends on [4Fe-4S] cluster as a cofactor.

The catalysed reaction is isopentenyl diphosphate + 2 oxidized [2Fe-2S]-[ferredoxin] + H2O = (2E)-4-hydroxy-3-methylbut-2-enyl diphosphate + 2 reduced [2Fe-2S]-[ferredoxin] + 2 H(+). It catalyses the reaction dimethylallyl diphosphate + 2 oxidized [2Fe-2S]-[ferredoxin] + H2O = (2E)-4-hydroxy-3-methylbut-2-enyl diphosphate + 2 reduced [2Fe-2S]-[ferredoxin] + 2 H(+). It functions in the pathway isoprenoid biosynthesis; dimethylallyl diphosphate biosynthesis; dimethylallyl diphosphate from (2E)-4-hydroxy-3-methylbutenyl diphosphate: step 1/1. It participates in isoprenoid biosynthesis; isopentenyl diphosphate biosynthesis via DXP pathway; isopentenyl diphosphate from 1-deoxy-D-xylulose 5-phosphate: step 6/6. Catalyzes the conversion of 1-hydroxy-2-methyl-2-(E)-butenyl 4-diphosphate (HMBPP) into a mixture of isopentenyl diphosphate (IPP) and dimethylallyl diphosphate (DMAPP). Acts in the terminal step of the DOXP/MEP pathway for isoprenoid precursor biosynthesis. This Yersinia pseudotuberculosis serotype O:1b (strain IP 31758) protein is 4-hydroxy-3-methylbut-2-enyl diphosphate reductase.